Here is an 89-residue protein sequence, read N- to C-terminus: Putative protein T-ENOL (89 aa).

Disordered stretches follow at residues M1–L31 and R54–R89.

Specifically expressed in testis (at protein level).

The chain is Putative protein T-ENOL from Rattus norvegicus (Rat).